A 116-amino-acid chain; its full sequence is S-adenosylmethionine decarboxylase proenzyme (116 aa).

Ser62 serves as the catalytic Schiff-base intermediate with substrate; via pyruvic acid. At Ser62 the chain carries Pyruvic acid (Ser); by autocatalysis. The Proton acceptor; for processing activity role is filled by His67. Cys82 serves as the catalytic Proton donor; for catalytic activity.

The protein belongs to the prokaryotic AdoMetDC family. Type 1 subfamily. As to quaternary structure, heterotetramer of two alpha and two beta chains arranged as a dimer of alpha/beta heterodimers. The cofactor is pyruvate. Post-translationally, is synthesized initially as an inactive proenzyme. Formation of the active enzyme involves a self-maturation process in which the active site pyruvoyl group is generated from an internal serine residue via an autocatalytic post-translational modification. Two non-identical subunits are generated from the proenzyme in this reaction, and the pyruvate is formed at the N-terminus of the alpha chain, which is derived from the carboxyl end of the proenzyme. The post-translation cleavage follows an unusual pathway, termed non-hydrolytic serinolysis, in which the side chain hydroxyl group of the serine supplies its oxygen atom to form the C-terminus of the beta chain, while the remainder of the serine residue undergoes an oxidative deamination to produce ammonia and the pyruvoyl group blocking the N-terminus of the alpha chain.

The catalysed reaction is S-adenosyl-L-methionine + H(+) = S-adenosyl 3-(methylsulfanyl)propylamine + CO2. It functions in the pathway amine and polyamine biosynthesis; S-adenosylmethioninamine biosynthesis; S-adenosylmethioninamine from S-adenosyl-L-methionine: step 1/1. Catalyzes the decarboxylation of S-adenosylmethionine to S-adenosylmethioninamine (dcAdoMet), the propylamine donor required for the synthesis of the polyamines spermine and spermidine from the diamine putrescine. This Thermomicrobium roseum (strain ATCC 27502 / DSM 5159 / P-2) protein is S-adenosylmethionine decarboxylase proenzyme.